A 459-amino-acid polypeptide reads, in one-letter code: Exodeoxyribonuclease 7 large subunit (459 aa).

This sequence belongs to the XseA family. In terms of assembly, heterooligomer composed of large and small subunits.

Its subcellular location is the cytoplasm. The catalysed reaction is Exonucleolytic cleavage in either 5'- to 3'- or 3'- to 5'-direction to yield nucleoside 5'-phosphates.. Its function is as follows. Bidirectionally degrades single-stranded DNA into large acid-insoluble oligonucleotides, which are then degraded further into small acid-soluble oligonucleotides. The sequence is that of Exodeoxyribonuclease 7 large subunit from Pseudomonas syringae pv. tomato (strain ATCC BAA-871 / DC3000).